The primary structure comprises 54 residues: Ferredoxin (54 aa).

4Fe-4S ferredoxin-type domains are found at residues 2–28 and 29–54; these read HVISDECVKCGACASTCPTGAIEEGET and KYVVTDSCIDCGACEAVCPTGAISAE. The [4Fe-4S] cluster site is built by cysteine 8, cysteine 11, cysteine 14, cysteine 18, cysteine 36, cysteine 39, cysteine 42, and cysteine 46.

[4Fe-4S] cluster is required as a cofactor.

Functionally, ferredoxins are iron-sulfur proteins that transfer electrons in a wide variety of metabolic reactions. The chain is Ferredoxin from Megasphaera elsdenii.